A 329-amino-acid chain; its full sequence is MSNLSCAAPDVLERLDSFNMKLSQFVDLLAIILAFFASYFAIKIVINQSFFELSTKILLLQNLFYTNLYQISYGIEAIGMLYRGFFMLSEPCSILQSETSCAPYFKVLMIGTSGMIFGQTGLLIERAFATFATTYKTKKSVYIGVCISLIVLVCSTSSGFIILWDDPLEGWTIGCFAVSKSVVPRFNLFSILSTVLTLFNLIVSIFIQRYNKRFEFETRFKVGARFQKQELIESTGAICFLALSQFLWMFMYSFGILILRIIREDILPSTFYFWIAWCYTMPFIALMFPVLLIYRIRKTRARRTEKMKGITTEKQTQDDHIKQINAMWT.

The next 7 helical transmembrane spans lie at 26-46 (VDLLAIILAFFASYFAIKIVI), 68-88 (LYQISYGIEAIGMLYRGFFML), 104-124 (YFKVLMIGTSGMIFGQTGLLI), 143-163 (IGVCISLIVLVCSTSSGFIIL), 187-207 (NLFSILSTVLTLFNLIVSIFI), 238-258 (ICFLALSQFLWMFMYSFGILI), and 273-293 (FWIAWCYTMPFIALMFPVLLI).

The protein belongs to the nematode receptor-like protein sra family.

Its subcellular location is the membrane. This Caenorhabditis elegans protein is Serpentine receptor class alpha-6 (sra-6).